A 204-amino-acid polypeptide reads, in one-letter code: Serotype 3 fimbrial subunit (204 aa).

Residues 1 to 25 form the signal peptide; the sequence is MSKFSYPALRAALILAASPVLPALA. The cysteines at positions 41 and 84 are disulfide-linked.

This sequence belongs to the fimbrial protein family.

It is found in the fimbrium. In terms of biological role, bordetella pertussis is the causative agent of whooping cough. An essential step in the disease process is the attachment of the bacteria to the ciliated epithelium of the respiratory tract, enabling the organism to resist normal host-clearance mechanisms. It is unclear which bacterial cell surface component are responsible for adherence but the fimbriae of B.pertussis are prime candidates for being involved in this process. This chain is Serotype 3 fimbrial subunit (fim3), found in Bordetella pertussis (strain Tohama I / ATCC BAA-589 / NCTC 13251).